The chain runs to 801 residues: Phenylalanine--tRNA ligase beta subunit (801 aa).

In terms of domain architecture, tRNA-binding spans 39–147; sequence GGGLDQVVVA…SDLPLGVPLF (109 aa). The B5 domain maps to 401–477; that stretch reads VSHRTIRFRV…RLNGYDRIET (77 aa). Residues Asp455, Asp461, Glu464, and Glu465 each coordinate Mg(2+). In terms of domain architecture, FDX-ACB spans 708 to 801; it reads SRFPDTFRDI…LVAKLGATIR (94 aa).

The protein belongs to the phenylalanyl-tRNA synthetase beta subunit family. Type 1 subfamily. In terms of assembly, tetramer of two alpha and two beta subunits. The cofactor is Mg(2+).

The protein resides in the cytoplasm. The catalysed reaction is tRNA(Phe) + L-phenylalanine + ATP = L-phenylalanyl-tRNA(Phe) + AMP + diphosphate + H(+). This is Phenylalanine--tRNA ligase beta subunit from Geobacter sulfurreducens (strain ATCC 51573 / DSM 12127 / PCA).